Reading from the N-terminus, the 201-residue chain is Imidazoleglycerol-phosphate dehydratase (201 aa).

Belongs to the imidazoleglycerol-phosphate dehydratase family.

The protein resides in the cytoplasm. The enzyme catalyses D-erythro-1-(imidazol-4-yl)glycerol 3-phosphate = 3-(imidazol-4-yl)-2-oxopropyl phosphate + H2O. It functions in the pathway amino-acid biosynthesis; L-histidine biosynthesis; L-histidine from 5-phospho-alpha-D-ribose 1-diphosphate: step 6/9. The chain is Imidazoleglycerol-phosphate dehydratase from Prochlorococcus marinus (strain AS9601).